The primary structure comprises 411 residues: Alpha-1-antiproteinase (411 aa).

An N-terminal signal peptide occupies residues 1–24 (MAPSISRGLLLLAALCCLAPSFLA). Ser33 bears the Phosphoserine mark. Asn64, Asn101, and Asn265 each carry an N-linked (GlcNAc...) asparagine glycan. Positions 367–386 (GATVVEAVPMSLPPQVKFDH) are RCL. Ser377 carries the phosphoserine modification.

This sequence belongs to the serpin family. Interacts with CELA2A. Interacts with ERGIC3 and LMAN1/ERGIC53. Interacts with PRSS1/Trypsin. As to expression, plasma.

Its subcellular location is the secreted. Inhibitor of serine proteases. The primary target is elastase, but also has a moderate affinity for plasmin and thrombin. The protein is Alpha-1-antiproteinase (Serpina1) of Rattus norvegicus (Rat).